Consider the following 101-residue polypeptide: MAGQKIRIRLKAYDHEAIDASAKKIVETVTRTGARVVGPVPLPTEKNVYAVIRSPHKYKDSREHFEMRTHKRLIDILDPTPKTVDALMRIDLPASVDVNIQ.

This sequence belongs to the universal ribosomal protein uS10 family. As to quaternary structure, part of the 30S ribosomal subunit.

Involved in the binding of tRNA to the ribosomes. In Corynebacterium aurimucosum (strain ATCC 700975 / DSM 44827 / CIP 107346 / CN-1) (Corynebacterium nigricans), this protein is Small ribosomal subunit protein uS10.